The primary structure comprises 467 residues: ATP synthase subunit beta (467 aa).

Residue 154–161 coordinates ATP; it reads GGAGVGKT.

Belongs to the ATPase alpha/beta chains family. F-type ATPases have 2 components, CF(1) - the catalytic core - and CF(0) - the membrane proton channel. CF(1) has five subunits: alpha(3), beta(3), gamma(1), delta(1), epsilon(1). CF(0) has three main subunits: a(1), b(2) and c(9-12). The alpha and beta chains form an alternating ring which encloses part of the gamma chain. CF(1) is attached to CF(0) by a central stalk formed by the gamma and epsilon chains, while a peripheral stalk is formed by the delta and b chains.

The protein resides in the cell inner membrane. It catalyses the reaction ATP + H2O + 4 H(+)(in) = ADP + phosphate + 5 H(+)(out). Its function is as follows. Produces ATP from ADP in the presence of a proton gradient across the membrane. The catalytic sites are hosted primarily by the beta subunits. This chain is ATP synthase subunit beta, found in Leptospira borgpetersenii serovar Hardjo-bovis (strain JB197).